Here is a 458-residue protein sequence, read N- to C-terminus: Peptidyl-prolyl cis-trans isomerase FKBP4 (458 aa).

An N-acetylmethionine; in peptidyl-prolyl cis-trans isomerase FKBP4; alternate modification is found at Met1. N-acetylthreonine; in peptidyl-prolyl cis-trans isomerase FKBP4, N-terminally processed; partial is present on Thr2. The region spanning 50–138 (GDRVFVHYTG…VFEVELFEFK (89 aa)) is the PPIase FKBP-type 1 domain. Residue Thr143 is modified to Phosphothreonine; by CK2. The 87-residue stretch at 167 to 253 (GAMVEVALEG…RYEVHLKSFE (87 aa)) folds into the PPIase FKBP-type 2 domain. The residue at position 220 (Tyr220) is a Phosphotyrosine. Positions 267 to 400 (LEQSNIVKER…TQLAVCQQRT (134 aa)) are interaction with tubulin. TPR repeat units lie at residues 270–303 (SNIV…LEYE), 319–352 (LASH…DSNN), and 353–386 (EKGL…YPSN). Lys282 carries the N6-acetyllysine modification. Arg373 carries the post-translational modification Omega-N-methylarginine. A disordered region spans residues 423–458 (HKAKTEVAAGDHPTDAEMKGEPNNVAGNQAQVKTEA). Residue Thr436 is modified to Phosphothreonine. Residue Lys441 forms a Glycyl lysine isopeptide (Lys-Gly) (interchain with G-Cter in SUMO1) linkage. The segment covering 447-458 (VAGNQAQVKTEA) has biased composition (polar residues).

As to quaternary structure, homodimer. Interacts with GLMN. Associates with HSP90AA1 and HSP70 in steroid hormone receptor complexes. Also interacts with peroxisomal phytanoyl-CoA alpha-hydroxylase (PHYH). Interacts with NR3C1 and dynein. Interacts with HSF1 in the HSP90 complex. Associates with tubulin. Interacts with MAPT/TAU. Interacts (via TPR domain) with S100A1, S100A2 and S100A6; the interaction is Ca(2+) dependent. Interaction with S100A1 and S100A2 (but not with S100A6) leads to inhibition of FKBP4-HSP90 interaction. Interacts with dynein; causes partially NR3C1 transport to the nucleus. In terms of processing, phosphorylation by CK2 results in loss of HSP90 binding activity. Widely detected in the brain (at protein level).

It is found in the cytoplasm. The protein resides in the cytosol. The protein localises to the mitochondrion. Its subcellular location is the nucleus. It localises to the cytoskeleton. It is found in the cell projection. The protein resides in the axon. The enzyme catalyses [protein]-peptidylproline (omega=180) = [protein]-peptidylproline (omega=0). Its activity is regulated as follows. Inhibited by FK506. In terms of biological role, immunophilin protein with PPIase and co-chaperone activities. Component of unligated steroid receptors heterocomplexes through interaction with heat-shock protein 90 (HSP90). Plays a role in the intracellular trafficking of heterooligomeric forms of steroid hormone receptors between cytoplasm and nuclear compartments. May have a protective role against oxidative stress in mitochondria. Also acts as a regulator of microtubule dynamics by inhibiting MAPT/TAU ability to promote microtubule assembly. The PPIase activity controls neuronal growth cones via regulation of TRPC1 channel opening. The sequence is that of Peptidyl-prolyl cis-trans isomerase FKBP4 (Fkbp4) from Rattus norvegicus (Rat).